We begin with the raw amino-acid sequence, 259 residues long: Aspartate/glutamate leucyltransferase (259 aa).

This sequence belongs to the R-transferase family. Bpt subfamily.

Its subcellular location is the cytoplasm. The catalysed reaction is N-terminal L-glutamyl-[protein] + L-leucyl-tRNA(Leu) = N-terminal L-leucyl-L-glutamyl-[protein] + tRNA(Leu) + H(+). It carries out the reaction N-terminal L-aspartyl-[protein] + L-leucyl-tRNA(Leu) = N-terminal L-leucyl-L-aspartyl-[protein] + tRNA(Leu) + H(+). Functionally, functions in the N-end rule pathway of protein degradation where it conjugates Leu from its aminoacyl-tRNA to the N-termini of proteins containing an N-terminal aspartate or glutamate. The chain is Aspartate/glutamate leucyltransferase from Sinorhizobium medicae (strain WSM419) (Ensifer medicae).